Reading from the N-terminus, the 436-residue chain is tRNA(Ile)-lysidine synthase (436 aa).

27 to 32 (SGGVDS) contacts ATP.

The protein belongs to the tRNA(Ile)-lysidine synthase family.

The protein resides in the cytoplasm. It catalyses the reaction cytidine(34) in tRNA(Ile2) + L-lysine + ATP = lysidine(34) in tRNA(Ile2) + AMP + diphosphate + H(+). In terms of biological role, ligates lysine onto the cytidine present at position 34 of the AUA codon-specific tRNA(Ile) that contains the anticodon CAU, in an ATP-dependent manner. Cytidine is converted to lysidine, thus changing the amino acid specificity of the tRNA from methionine to isoleucine. This is tRNA(Ile)-lysidine synthase from Vibrio vulnificus (strain YJ016).